A 262-amino-acid chain; its full sequence is Triosephosphate isomerase (262 aa).

9 to 11 contributes to the substrate binding site; it reads NWK. His99 functions as the Electrophile in the catalytic mechanism. Glu171 acts as the Proton acceptor in catalysis. Residues Gly177 and Ser216 each contribute to the substrate site.

This sequence belongs to the triosephosphate isomerase family. As to quaternary structure, homodimer.

It is found in the cytoplasm. The catalysed reaction is D-glyceraldehyde 3-phosphate = dihydroxyacetone phosphate. It participates in carbohydrate biosynthesis; gluconeogenesis. Its pathway is carbohydrate degradation; glycolysis; D-glyceraldehyde 3-phosphate from glycerone phosphate: step 1/1. Its function is as follows. Involved in the gluconeogenesis. Catalyzes stereospecifically the conversion of dihydroxyacetone phosphate (DHAP) to D-glyceraldehyde-3-phosphate (G3P). The polypeptide is Triosephosphate isomerase (Blochmanniella floridana).